Consider the following 254-residue polypeptide: Pimeloyl-[acyl-carrier protein] methyl ester esterase (254 aa).

The region spanning 16 to 242 is the AB hydrolase-1 domain; it reads LVLIHGWGMN…ASHAPFISHP (227 aa). Substrate-binding positions include Trp-22, 82–83, and 143–147; these read SL and FLALQ. Ser-82 (nucleophile) is an active-site residue. Residues Asp-207 and His-235 contribute to the active site. A substrate-binding site is contributed by His-235.

It belongs to the AB hydrolase superfamily. Carboxylesterase BioH family. In terms of assembly, monomer.

The protein localises to the cytoplasm. The enzyme catalyses 6-carboxyhexanoyl-[ACP] methyl ester + H2O = 6-carboxyhexanoyl-[ACP] + methanol + H(+). It participates in cofactor biosynthesis; biotin biosynthesis. Functionally, the physiological role of BioH is to remove the methyl group introduced by BioC when the pimeloyl moiety is complete. It allows to synthesize pimeloyl-ACP via the fatty acid synthetic pathway through the hydrolysis of the ester bonds of pimeloyl-ACP esters. This is Pimeloyl-[acyl-carrier protein] methyl ester esterase from Photobacterium profundum (strain SS9).